We begin with the raw amino-acid sequence, 136 residues long: Cell wall synthesis protein CwsA (136 aa).

A helical membrane pass occupies residues 94–114 (LLIAAVAVTVLGGGAAAFSIV).

The protein belongs to the CwsA family. As to quaternary structure, interacts with CrgA and Wag31.

The protein resides in the cell membrane. Its function is as follows. Required for regulated cell division, cell wall synthesis and the maintenance of cell shape. This is Cell wall synthesis protein CwsA from Mycolicibacterium smegmatis (strain ATCC 700084 / mc(2)155) (Mycobacterium smegmatis).